Reading from the N-terminus, the 353-residue chain is 3-isopropylmalate dehydrogenase (353 aa).

73–86 provides a ligand contact to NAD(+); sequence GPQYDTLDRPLRPE. Arginine 93, arginine 103, arginine 131, and aspartate 220 together coordinate substrate. 3 residues coordinate Mg(2+): aspartate 220, aspartate 244, and aspartate 248. Residue 278–290 coordinates NAD(+); that stretch reads GSAPDIAGKNLAN.

Belongs to the isocitrate and isopropylmalate dehydrogenases family. LeuB type 1 subfamily. As to quaternary structure, homodimer. Mg(2+) serves as cofactor. Mn(2+) is required as a cofactor.

The protein resides in the cytoplasm. It carries out the reaction (2R,3S)-3-isopropylmalate + NAD(+) = 4-methyl-2-oxopentanoate + CO2 + NADH. It functions in the pathway amino-acid biosynthesis; L-leucine biosynthesis; L-leucine from 3-methyl-2-oxobutanoate: step 3/4. Catalyzes the oxidation of 3-carboxy-2-hydroxy-4-methylpentanoate (3-isopropylmalate) to 3-carboxy-4-methyl-2-oxopentanoate. The product decarboxylates to 4-methyl-2 oxopentanoate. This chain is 3-isopropylmalate dehydrogenase, found in Thiobacillus denitrificans (strain ATCC 25259 / T1).